The sequence spans 488 residues: MGQLFSFFEEVPNIIHEAINIALIAVSLIAALKGMINLWKSGLFQLIFFLTLAGRSCSFRIGRSTELQNITFDMLKVFEDHPTSCMVNHSTYYVHENKNATWCLEVSVTDVTLLMAEHDRQVLNNLSNCVHPAVEHRSRMVGLLEWIFRALKYDFNHDPTPLCQKQTSTVNETRVQINITEGFGSHGFEDTILQRLGVLFGSRIAFSNIQDLGKKRFLLIRNSTWKNQCEMNHVNSMHLMLANAGRSSGSRRPLGIFSWTITDAVGNDMPGGYCLERWMLVTSDLKCFGNTALAKCNLDHDSEFCDMLKLFEFNKKAIETLNDNTKNKVNLLTHSINALISDNLLMKNRLKELLNTPYCNYTKFWYVNHTASGEHSLPRCWLVRNNSYLNESEFRNDWIIESDHLLSEMLNKEYIDRQGKTPLTLVDICFWSTLFFTTTLFLHLVGFPTHRHIRGEPCPLPHRLNSRGGCRCGKYPELKKPITWHKNH.

The N-myristoyl glycine; by host moiety is linked to residue glycine 2. Topologically, residues 2 to 17 are extracellular; sequence GQLFSFFEEVPNIIHE. The chain crosses the membrane as a helical span at residues 18–32; it reads AINIALIAVSLIAAL. Lysine 33 is a topological domain (cytoplasmic). Residues 34–53 form a helical membrane-spanning segment; it reads GMINLWKSGLFQLIFFLTLA. 2 consecutive stretches face the extracellular side: residues 54–58 and 59–427; these read GRSCS and FRIG…TLVD. Cysteine 57 contacts Zn(2+). Asparagine 69, asparagine 88, asparagine 99, asparagine 125, asparagine 171, asparagine 178, and asparagine 222 each carry an N-linked (GlcNAc...) asparagine; by host glycan. Cystine bridges form between cysteine 85–cysteine 229, cysteine 274–cysteine 287, cysteine 296–cysteine 305, and cysteine 359–cysteine 380. N-linked (GlcNAc...) asparagine; by host glycosylation is found at asparagine 360, asparagine 368, asparagine 385, and asparagine 390. The chain crosses the membrane as a helical span at residues 428–448; that stretch reads ICFWSTLFFTTTLFLHLVGFP. The Cytoplasmic portion of the chain corresponds to 449–488; sequence THRHIRGEPCPLPHRLNSRGGCRCGKYPELKKPITWHKNH. Zn(2+) is bound by residues histidine 450, histidine 452, cysteine 458, histidine 462, cysteine 470, cysteine 472, and histidine 488.

It belongs to the arenaviridae GPC protein family. Homotetramer; disulfide-linked. In terms of assembly, homotetramer. GP2 homotetramers bind through ionic interactions with GP1 homotetramers to form the GP complex together with the stable signal peptide. The GP-C polyprotein interacts with the host protease MBTPS1/SKI-1 resulting in the polyprotein processing. In terms of processing, specific enzymatic cleavages in vivo yield mature proteins. GP-C polyprotein is cleaved in the endoplasmic reticulum by the host protease MBTPS1. Only cleaved glycoprotein is incorporated into virions. Post-translationally, the SSP remains stably associated with the GP complex following cleavage by signal peptidase and plays crucial roles in the trafficking of GP through the secretory pathway. Myristoylation is necessary for GP2-mediated fusion activity.

It localises to the virion membrane. Its subcellular location is the host endoplasmic reticulum membrane. It is found in the host Golgi apparatus membrane. The protein resides in the host cell membrane. In terms of biological role, interacts with the host receptor. Mediates virus attachment to host TFRC. This attachment induces virion internalization predominantly through clathrin-mediated endocytosis. Functionally, class I viral fusion protein that directs fusion of viral and host endosomal membranes, leading to delivery of the nucleocapsid into the cytoplasm. Membrane fusion is mediated by irreversible conformational changes induced upon acidification in the endosome. Its function is as follows. Stable signal peptide (SSP): cleaved and functions as a signal peptide. In addition, it is also retained as the third component of the GP complex. The SSP is required for efficient glycoprotein expression, post-translational maturation cleavage of GP1 and GP2, glycoprotein transport to the cell surface plasma membrane, formation of infectious virus particles, and acid pH-dependent glycoprotein-mediated cell fusion. In Homo sapiens (Human), this protein is Pre-glycoprotein polyprotein GP complex.